The chain runs to 101 residues: Small ribosomal subunit protein eS24 (101 aa).

This sequence belongs to the eukaryotic ribosomal protein eS24 family.

The sequence is that of Small ribosomal subunit protein eS24 from Methanocaldococcus jannaschii (strain ATCC 43067 / DSM 2661 / JAL-1 / JCM 10045 / NBRC 100440) (Methanococcus jannaschii).